Here is a 616-residue protein sequence, read N- to C-terminus: Glutamine--fructose-6-phosphate aminotransferase [isomerizing] (616 aa).

Residue cysteine 2 is the Nucleophile; for GATase activity of the active site. The Glutamine amidotransferase type-2 domain maps to 2-222 (CGIIGYSGPR…QERIVALSGD (221 aa)). Residues 70 to 89 (TGIGHTRWATHGEPSDRNAH) form a disordered region. 2 consecutive SIS domains span residues 289–428 (IRDD…LRGF) and 461–606 (LAHW…VDRP). Lysine 611 functions as the For Fru-6P isomerization activity in the catalytic mechanism.

In terms of assembly, homodimer.

Its subcellular location is the cytoplasm. It carries out the reaction D-fructose 6-phosphate + L-glutamine = D-glucosamine 6-phosphate + L-glutamate. Functionally, catalyzes the first step in hexosamine metabolism, converting fructose-6P into glucosamine-6P using glutamine as a nitrogen source. The polypeptide is Glutamine--fructose-6-phosphate aminotransferase [isomerizing] (Tropheryma whipplei (strain TW08/27) (Whipple's bacillus)).